The sequence spans 429 residues: UDP-N-acetylglucosamine 1-carboxyvinyltransferase (429 aa).

22–23 (KN) provides a ligand contact to phosphoenolpyruvate. A UDP-N-acetyl-alpha-D-glucosamine-binding site is contributed by Arg-102. The active-site Proton donor is Cys-126. Position 126 is a 2-(S-cysteinyl)pyruvic acid O-phosphothioketal (Cys-126). UDP-N-acetyl-alpha-D-glucosamine is bound by residues 131–135 (RPVDL), Asp-316, and Ile-338.

Belongs to the EPSP synthase family. MurA subfamily.

The protein localises to the cytoplasm. The enzyme catalyses phosphoenolpyruvate + UDP-N-acetyl-alpha-D-glucosamine = UDP-N-acetyl-3-O-(1-carboxyvinyl)-alpha-D-glucosamine + phosphate. Its pathway is cell wall biogenesis; peptidoglycan biosynthesis. In terms of biological role, cell wall formation. Adds enolpyruvyl to UDP-N-acetylglucosamine. This chain is UDP-N-acetylglucosamine 1-carboxyvinyltransferase, found in Methylorubrum populi (strain ATCC BAA-705 / NCIMB 13946 / BJ001) (Methylobacterium populi).